The chain runs to 409 residues: Pyruvate dehydrogenase E1 component subunit alpha, mitochondrial (409 aa).

Phosphothreonine is present on Thr-6. Residues His-109, Tyr-135, Arg-136, Ala-174, Gly-182, Val-184, Asp-213, Gly-214, Ala-215, Asn-242, and Tyr-244 each contribute to the pyruvate site. Residues Tyr-135 and Arg-136 each contribute to the thiamine diphosphate site. Residues Gly-182, Val-184, Asp-213, Gly-214, Ala-215, and Asn-242 each coordinate thiamine diphosphate. Asp-213 lines the Mg(2+) pocket. The Mg(2+) site is built by Asn-242 and Tyr-244. A Phosphotyrosine modification is found at Tyr-306. Residue His-309 coordinates thiamine diphosphate. Residues Ser-310 and Ser-312 each carry the phosphoserine modification.

As to quaternary structure, tetramer of 2 alpha and 2 beta subunits. Thiamine diphosphate serves as cofactor. The cofactor is Mg(2+).

Its subcellular location is the mitochondrion matrix. The catalysed reaction is N(6)-[(R)-lipoyl]-L-lysyl-[protein] + pyruvate + H(+) = N(6)-[(R)-S(8)-acetyldihydrolipoyl]-L-lysyl-[protein] + CO2. Its activity is regulated as follows. E1 activity is regulated by phosphorylation (inactivation) and dephosphorylation (activation) of the alpha subunit. Its function is as follows. The pyruvate dehydrogenase complex catalyzes the overall conversion of pyruvate to acetyl-CoA and CO(2). It contains multiple copies of three enzymatic components: pyruvate dehydrogenase (E1), dihydrolipoamide acetyltransferase (E2) and lipoamide dehydrogenase (E3). The protein is Pyruvate dehydrogenase E1 component subunit alpha, mitochondrial (pda1) of Schizosaccharomyces pombe (strain 972 / ATCC 24843) (Fission yeast).